Consider the following 235-residue polypeptide: Ribosomal RNA large subunit methyltransferase E (235 aa).

S-adenosyl-L-methionine contacts are provided by Gly-76, Trp-78, Asp-99, Asp-115, and Asp-139. Lys-179 functions as the Proton acceptor in the catalytic mechanism.

It belongs to the class I-like SAM-binding methyltransferase superfamily. RNA methyltransferase RlmE family.

Its subcellular location is the cytoplasm. The catalysed reaction is uridine(2552) in 23S rRNA + S-adenosyl-L-methionine = 2'-O-methyluridine(2552) in 23S rRNA + S-adenosyl-L-homocysteine + H(+). Functionally, specifically methylates the uridine in position 2552 of 23S rRNA at the 2'-O position of the ribose in the fully assembled 50S ribosomal subunit. The polypeptide is Ribosomal RNA large subunit methyltransferase E (Rhodopseudomonas palustris (strain BisB5)).